Here is a 332-residue protein sequence, read N- to C-terminus: MDPRSEVLLRQAELFQGPLLIAGAPADDLLGQLPQAQAWTWHAGDQAMLDSRFAGRSHYAVEPPDLPFDSAVLFLPKSRELAAYLLNALASRLAGRELYLVGEKRGGIEGAAKQLQAFGKPRKLDSARHCQLWQVTIDQAPQAKPLESLAERFELALEDGPLQVVSLPGVFSHGRLDRGTALLLKHLDGLPDGHMLDFGCGAGVLGATLKRRYPQSRVTMLDVDAFAVAASRLTLAANGLEGDVISGDGIDAAPTELSLILSNPPFHTGVHTNYQASENLLKKSAVHLRKGGEMRLVANSFLRYQPLIEGALGNCQVRDEADGFRIYQATHG.

It belongs to the methyltransferase superfamily. RsmC family. Monomer.

It localises to the cytoplasm. It carries out the reaction guanosine(1207) in 16S rRNA + S-adenosyl-L-methionine = N(2)-methylguanosine(1207) in 16S rRNA + S-adenosyl-L-homocysteine + H(+). Specifically methylates the guanine in position 1207 of 16S rRNA in the 30S particle. In Pseudomonas putida (strain GB-1), this protein is Ribosomal RNA small subunit methyltransferase C.